Consider the following 841-residue polypeptide: Probable outer membrane usher protein EcpC (841 aa).

The N-terminal stretch at 1-29 (MPLRRFSPGLKAQFAFGMVFLFVQPDASA) is a signal peptide.

This sequence belongs to the EcpC/MatD family.

In terms of biological role, part of the ecpRABCDE operon, which encodes the E.coli common pilus (ECP). ECP is found in both commensal and pathogenic strains and plays a dual role in early-stage biofilm development and host cell recognition. The protein is Probable outer membrane usher protein EcpC (ecpC) of Escherichia coli O6:H1 (strain CFT073 / ATCC 700928 / UPEC).